The chain runs to 262 residues: Ribosome-recycling factor, mitochondrial (262 aa).

The transit peptide at 1-55 (MALGLRCFRLVHPAFCNSLAALTRPVSEVTLQTVRGRQNDHGQCMAYAAVPVRHF) directs the protein to the mitochondrion.

This sequence belongs to the RRF family.

It localises to the mitochondrion. Responsible for the disassembly of ribosomes from messenger RNA at the termination of mitochondrial protein biosynthesis. Acts in collaboration with GFM2. Promotes mitochondrial ribosome recycling by dissolution of intersubunit contacts. This Bos taurus (Bovine) protein is Ribosome-recycling factor, mitochondrial (MRRF).